A 253-amino-acid chain; its full sequence is NAC transcription factor 32 (253 aa).

In terms of domain architecture, NAC spans 10 to 160 (FPPGFRFHPT…DWVLCRIYNK (151 aa)). Residues 106–166 (VGIKKALVFY…IYNKKGVIEK (61 aa)) mediate DNA binding.

Expressed in germinating seeds, roots, leaf veins, open flowers and silique stalks.

The protein localises to the nucleus. Its function is as follows. Transcriptional activator that positively regulates age-dependent senescence, dark-induced leaf senescence and stress-induced senescence. Regulates leaf senescence through the modulation of the expression of senescence-associated genes SGR1/NYE1, SAG113 and SAUR36/SAG201, which are involved in chlorophyll degradation, and abscisic acid (ABA) and auxin promotion of senescence, respectively. Promotes reactive oxygen species (ROS) production during age-dependent and stress-induced senescence. Positively regulates auxin-mediated responses in roots. Stress-responsive NAC transcription factor involved in ABA-inducible leaf senescence signaling. Required for normal seed development and morphology. This Arabidopsis thaliana (Mouse-ear cress) protein is NAC transcription factor 32.